A 161-amino-acid chain; its full sequence is Monooxygenase AgnL5 (161 aa).

This sequence belongs to the avfA family.

Its pathway is secondary metabolite biosynthesis. Functionally, monooxygenase; part of the gene cluster that mediates the biosynthesis of agnestins, dihydroxy-xanthone metabolites. The pathway begins with the assembly and cyclization of atrochrysone thioester by the non-reducing polyketide synthase Agnpks1. The atrochrysone carboxyl ACP thioesterase AgnL7 then breaks the thioester bond and releases the atrochrysone carboxylic acid as the first enzyme-free intermediate. The decarboxylase AgnL1 then catalyzes the concerted decarboxylation-elimination required to convert atochrysone carboxylic acid into emodin anthrone, which is further oxidized to emodin by the anthrone oxygenase AgnL2. Emodin then undergoes reduction catalyzed by the oxidoreductase AgnL4 to yield the dihydroquinone tautomer which is the substrate for reduction by the short chain dehydrogenase AgnL6 reduction to produce hydroxyketone, followed by AgnL8 dehydration and likely spontaneous autoxidation to chrysophanol. Baeyer-Villiger oxidation by the oxidase AgnL3 leads to monodictyphenone via cleavage of the C-10/C-10a bond of chrysophanol. Alternative cleavage at the C-4a/C-10 bond of chrysophanol also leads to the formation some cephalone F. Further conversion to agnestins A and B, requires reduction to dihydro-monodictyphenone, oxidation to agnestin C probably via an epoxide, and rearrangement to either agnestin A or agnestin B directly, although agnestin A or agnestin B can also interconvert. Within the cluster, AgnR1 is the only unassigned oxidoreductase present which could be involved in this conversion. However, AgnR1 seems not to be involved in this step, and thus genes involved in the proposed oxidation/reduction may be located elsewhere on the genome. Further agnestin A derivatives are probably formed by spontaneous decarboxylations, dehydrations and methanolysis reactions. The sequence is that of Monooxygenase AgnL5 from Paecilomyces divaricatus (Penicillium divaricatum).